The following is a 168-amino-acid chain: Xanthine-guanine phosphoribosyltransferase (168 aa).

5-phospho-alpha-D-ribose 1-diphosphate-binding positions include 43–44 (RG) and 102–110 (DDLVDTGAT). Asp103 serves as a coordination point for Mg(2+). The guanine site is built by Asp106 and Ile149. 2 residues coordinate xanthine: Asp106 and Ile149. Residues 106–110 (DTGAT) and 148–149 (WI) each bind GMP.

This sequence belongs to the purine/pyrimidine phosphoribosyltransferase family. XGPT subfamily. In terms of assembly, homotetramer. Requires Mg(2+) as cofactor.

Its subcellular location is the cell inner membrane. It catalyses the reaction GMP + diphosphate = guanine + 5-phospho-alpha-D-ribose 1-diphosphate. The enzyme catalyses XMP + diphosphate = xanthine + 5-phospho-alpha-D-ribose 1-diphosphate. The catalysed reaction is IMP + diphosphate = hypoxanthine + 5-phospho-alpha-D-ribose 1-diphosphate. Its pathway is purine metabolism; GMP biosynthesis via salvage pathway; GMP from guanine: step 1/1. The protein operates within purine metabolism; XMP biosynthesis via salvage pathway; XMP from xanthine: step 1/1. In terms of biological role, purine salvage pathway enzyme that catalyzes the transfer of the ribosyl-5-phosphate group from 5-phospho-alpha-D-ribose 1-diphosphate (PRPP) to the N9 position of the 6-oxopurines guanine and xanthine to form the corresponding ribonucleotides GMP (guanosine 5'-monophosphate) and XMP (xanthosine 5'-monophosphate), with the release of PPi. To a lesser extent, also acts on hypoxanthine. The polypeptide is Xanthine-guanine phosphoribosyltransferase (Nitrobacter hamburgensis (strain DSM 10229 / NCIMB 13809 / X14)).